The following is a 298-amino-acid chain: MGQKIHPTGFRLSISRNWASRWYANDRDFAGMLAEDIKVREYLKAKLKNASVSRVLIERPAKNARITIFSARPGVVIGKKGEDIENLKRELSRQLGVPVAVNIEEVRKPEIDAKLIADSITQQLEKRIMFRRAMKRAMQNAMRLGALGIKIMSSGRLNGIEIARCEWYREGRVPLHTLRADIDYGTSEAQTTYGIIGVKVWVYKGDTLGRNDLPAAVEARTDEERRPRGPRRDDRGARPGADRPAPRVARRPPMGANTAPSDGSDKPAEATGAGAPKPAVQRVRKVAAPAAAADGKGE.

Residues 39-107 (VREYLKAKLK…PVAVNIEEVR (69 aa)) enclose the KH type-2 domain. Residues 214-298 (PAAVEARTDE…PAAAADGKGE (85 aa)) form a disordered region. Basic and acidic residues predominate over residues 219–245 (ARTDEERRPRGPRRDDRGARPGADRPA). A compositionally biased stretch (low complexity) spans 277–298 (KPAVQRVRKVAAPAAAADGKGE).

It belongs to the universal ribosomal protein uS3 family. In terms of assembly, part of the 30S ribosomal subunit. Forms a tight complex with proteins S10 and S14.

Functionally, binds the lower part of the 30S subunit head. Binds mRNA in the 70S ribosome, positioning it for translation. The chain is Small ribosomal subunit protein uS3 from Albidiferax ferrireducens (strain ATCC BAA-621 / DSM 15236 / T118) (Rhodoferax ferrireducens).